Here is a 273-residue protein sequence, read N- to C-terminus: 4-hydroxy-tetrahydrodipicolinate reductase (273 aa).

NAD(+)-binding positions include 8-13 (GCAGNM), Glu-34, 102-104 (GTT), and 128-131 (SPNM). His-161 functions as the Proton donor/acceptor in the catalytic mechanism. His-162 provides a ligand contact to (S)-2,3,4,5-tetrahydrodipicolinate. The active-site Proton donor is Lys-165. 171–172 (GT) contacts (S)-2,3,4,5-tetrahydrodipicolinate.

This sequence belongs to the DapB family.

The protein resides in the cytoplasm. The enzyme catalyses (S)-2,3,4,5-tetrahydrodipicolinate + NAD(+) + H2O = (2S,4S)-4-hydroxy-2,3,4,5-tetrahydrodipicolinate + NADH + H(+). It catalyses the reaction (S)-2,3,4,5-tetrahydrodipicolinate + NADP(+) + H2O = (2S,4S)-4-hydroxy-2,3,4,5-tetrahydrodipicolinate + NADPH + H(+). It functions in the pathway amino-acid biosynthesis; L-lysine biosynthesis via DAP pathway; (S)-tetrahydrodipicolinate from L-aspartate: step 4/4. Functionally, catalyzes the conversion of 4-hydroxy-tetrahydrodipicolinate (HTPA) to tetrahydrodipicolinate. This is 4-hydroxy-tetrahydrodipicolinate reductase from Methanosphaera stadtmanae (strain ATCC 43021 / DSM 3091 / JCM 11832 / MCB-3).